Here is a 277-residue protein sequence, read N- to C-terminus: Phosphatidylglycerol--prolipoprotein diacylglyceryl transferase (277 aa).

The next 3 helical transmembrane spans lie at 16–36 (FFQI…FYFL), 62–82 (LLFF…VLFY), and 101–121 (GMAF…FAHL). Arg145 provides a ligand contact to a 1,2-diacyl-sn-glycero-3-phospho-(1'-sn-glycerol). Helical transmembrane passes span 214 to 234 (PIWG…RFIA) and 243 to 263 (FLGL…PMIV).

The protein belongs to the Lgt family.

It is found in the cell inner membrane. It carries out the reaction L-cysteinyl-[prolipoprotein] + a 1,2-diacyl-sn-glycero-3-phospho-(1'-sn-glycerol) = an S-1,2-diacyl-sn-glyceryl-L-cysteinyl-[prolipoprotein] + sn-glycerol 1-phosphate + H(+). It participates in protein modification; lipoprotein biosynthesis (diacylglyceryl transfer). Its function is as follows. Catalyzes the transfer of the diacylglyceryl group from phosphatidylglycerol to the sulfhydryl group of the N-terminal cysteine of a prolipoprotein, the first step in the formation of mature lipoproteins. The protein is Phosphatidylglycerol--prolipoprotein diacylglyceryl transferase of Leptothrix cholodnii (strain ATCC 51168 / LMG 8142 / SP-6) (Leptothrix discophora (strain SP-6)).